A 151-amino-acid polypeptide reads, in one-letter code: 6,7-dimethyl-8-ribityllumazine synthase (151 aa).

5-amino-6-(D-ribitylamino)uracil contacts are provided by residues F18, 49-51 (ALE), and 74-76 (CVI). 79-80 (ET) contributes to the (2S)-2-hydroxy-3-oxobutyl phosphate binding site. Residue H82 is the Proton donor of the active site. Residue N107 coordinates 5-amino-6-(D-ribitylamino)uracil. R121 is a (2S)-2-hydroxy-3-oxobutyl phosphate binding site.

Belongs to the DMRL synthase family.

It catalyses the reaction (2S)-2-hydroxy-3-oxobutyl phosphate + 5-amino-6-(D-ribitylamino)uracil = 6,7-dimethyl-8-(1-D-ribityl)lumazine + phosphate + 2 H2O + H(+). It participates in cofactor biosynthesis; riboflavin biosynthesis; riboflavin from 2-hydroxy-3-oxobutyl phosphate and 5-amino-6-(D-ribitylamino)uracil: step 1/2. Its function is as follows. Catalyzes the formation of 6,7-dimethyl-8-ribityllumazine by condensation of 5-amino-6-(D-ribitylamino)uracil with 3,4-dihydroxy-2-butanone 4-phosphate. This is the penultimate step in the biosynthesis of riboflavin. This Bartonella tribocorum (strain CIP 105476 / IBS 506) protein is 6,7-dimethyl-8-ribityllumazine synthase.